The chain runs to 590 residues: Aspartate--tRNA(Asp/Asn) ligase (590 aa).

Glu-176 provides a ligand contact to L-aspartate. The tract at residues 200 to 203 (QLFK) is aspartate. L-aspartate is bound by residues Arg-222 and His-451. 222 to 224 (RDE) serves as a coordination point for ATP. Glu-485 contacts ATP. Residue Arg-492 participates in L-aspartate binding. 537-540 (GIDR) contributes to the ATP binding site.

It belongs to the class-II aminoacyl-tRNA synthetase family. Type 1 subfamily. In terms of assembly, homodimer.

The protein localises to the cytoplasm. It carries out the reaction tRNA(Asx) + L-aspartate + ATP = L-aspartyl-tRNA(Asx) + AMP + diphosphate. Functionally, aspartyl-tRNA synthetase with relaxed tRNA specificity since it is able to aspartylate not only its cognate tRNA(Asp) but also tRNA(Asn). Reaction proceeds in two steps: L-aspartate is first activated by ATP to form Asp-AMP and then transferred to the acceptor end of tRNA(Asp/Asn). This chain is Aspartate--tRNA(Asp/Asn) ligase, found in Ehrlichia ruminantium (strain Welgevonden).